We begin with the raw amino-acid sequence, 197 residues long: Probable nicotinate-nucleotide adenylyltransferase (197 aa).

This sequence belongs to the NadD family.

The enzyme catalyses nicotinate beta-D-ribonucleotide + ATP + H(+) = deamido-NAD(+) + diphosphate. Its pathway is cofactor biosynthesis; NAD(+) biosynthesis; deamido-NAD(+) from nicotinate D-ribonucleotide: step 1/1. Functionally, catalyzes the reversible adenylation of nicotinate mononucleotide (NaMN) to nicotinic acid adenine dinucleotide (NaAD). The chain is Probable nicotinate-nucleotide adenylyltransferase from Borrelia garinii subsp. bavariensis (strain ATCC BAA-2496 / DSM 23469 / PBi) (Borreliella bavariensis).